The primary structure comprises 404 residues: Cytoplasmic tRNA 2-thiolation protein 2 (404 aa).

The protein belongs to the CTU2/NCS2 family.

It localises to the cytoplasm. It functions in the pathway tRNA modification; 5-methoxycarbonylmethyl-2-thiouridine-tRNA biosynthesis. Plays a central role in 2-thiolation of mcm(5)S(2)U at tRNA wobble positions of tRNA(Lys), tRNA(Glu) and tRNA(Gln). May act by forming a heterodimer with NCS6/CTU1 that ligates sulfur from thiocarboxylated URM1 onto the uridine of tRNAs at wobble position. This Drosophila erecta (Fruit fly) protein is Cytoplasmic tRNA 2-thiolation protein 2.